We begin with the raw amino-acid sequence, 286 residues long: Orotidine 5'-phosphate decarboxylase (286 aa).

The Proton donor role is filled by K97.

It belongs to the OMP decarboxylase family. Type 2 subfamily.

The catalysed reaction is orotidine 5'-phosphate + H(+) = UMP + CO2. Its pathway is pyrimidine metabolism; UMP biosynthesis via de novo pathway; UMP from orotate: step 2/2. This chain is Orotidine 5'-phosphate decarboxylase (pyrF), found in Clostridium acetobutylicum (strain ATCC 824 / DSM 792 / JCM 1419 / IAM 19013 / LMG 5710 / NBRC 13948 / NRRL B-527 / VKM B-1787 / 2291 / W).